The primary structure comprises 48 residues: Sulfide dehydrogenase [flavocytochrome c] flavoprotein chain (48 aa).

Val-40–Asn-46 contacts FAD.

As to quaternary structure, dimer of one cytochrome and one flavoprotein.

It localises to the periplasm. It catalyses the reaction hydrogen sulfide + 2 Fe(III)-[cytochrome c] = sulfur + 2 Fe(II)-[cytochrome c] + H(+). The polypeptide is Sulfide dehydrogenase [flavocytochrome c] flavoprotein chain (Chlorobaculum thiosulfatiphilum (Chlorobium limicola f.sp. thiosulfatophilum)).